The sequence spans 224 residues: Small ribosomal subunit protein uS3 (224 aa).

One can recognise a KH type-2 domain in the interval Ile-38–Lys-106.

The protein belongs to the universal ribosomal protein uS3 family. As to quaternary structure, part of the 30S ribosomal subunit. Forms a tight complex with proteins S10 and S14.

Its function is as follows. Binds the lower part of the 30S subunit head. Binds mRNA in the 70S ribosome, positioning it for translation. This chain is Small ribosomal subunit protein uS3, found in Lactobacillus acidophilus (strain ATCC 700396 / NCK56 / N2 / NCFM).